The following is a 375-amino-acid chain: Chaperone protein DnaJ (375 aa).

Residues 5–69 form the J domain; that stretch reads DYYEVLGVGK…QKRAHYDQFG (65 aa). A CR-type zinc finger spans residues 132 to 214; it reads GKETTIEIPR…CGGTGKVKKR (83 aa). The Zn(2+) site is built by cysteine 145, cysteine 148, cysteine 162, cysteine 165, cysteine 188, cysteine 191, cysteine 202, and cysteine 205. CXXCXGXG motif repeat units follow at residues 145-152, 162-169, 188-195, and 202-209; these read CETCSGSG, CSHCGGSG, CHYCNGTG, and CSTCGGTG.

The protein belongs to the DnaJ family. As to quaternary structure, homodimer. Zn(2+) is required as a cofactor.

It localises to the cytoplasm. Its function is as follows. Participates actively in the response to hyperosmotic and heat shock by preventing the aggregation of stress-denatured proteins and by disaggregating proteins, also in an autonomous, DnaK-independent fashion. Unfolded proteins bind initially to DnaJ; upon interaction with the DnaJ-bound protein, DnaK hydrolyzes its bound ATP, resulting in the formation of a stable complex. GrpE releases ADP from DnaK; ATP binding to DnaK triggers the release of the substrate protein, thus completing the reaction cycle. Several rounds of ATP-dependent interactions between DnaJ, DnaK and GrpE are required for fully efficient folding. Also involved, together with DnaK and GrpE, in the DNA replication of plasmids through activation of initiation proteins. This Bacillus licheniformis (strain ATCC 14580 / DSM 13 / JCM 2505 / CCUG 7422 / NBRC 12200 / NCIMB 9375 / NCTC 10341 / NRRL NRS-1264 / Gibson 46) protein is Chaperone protein DnaJ.